The sequence spans 116 residues: Putative antiporter subunit mnhC2 (116 aa).

3 helical membrane-spanning segments follow: residues Leu3 to Leu23, Ile28 to His48, and Ala72 to Val92.

This sequence belongs to the CPA3 antiporters (TC 2.A.63) subunit C family. As to quaternary structure, may form a heterooligomeric complex that consists of seven subunits: mnhA2, mnhB2, mnhC2, mnhD2, mnhE2, mnhF2 and mnhG2.

It localises to the cell membrane. In Staphylococcus haemolyticus (strain JCSC1435), this protein is Putative antiporter subunit mnhC2 (mnhC2).